Reading from the N-terminus, the 770-residue chain is Transducin-like enhancer protein 1 (770 aa).

The segment at 1–131 (MFPQSRHPTP…IIGQQQLQAQ (131 aa)) is q domain. Disordered stretches follow at residues 128 to 157 (LQAQ…GIPP) and 176 to 348 (HLAI…PAID). The GP domain stretch occupies residues 132-199 (HLSHGHGPPV…HHRDREPGTS (68 aa)). Composition is skewed to basic and acidic residues over residues 178-196 (AIKD…DREP) and 209-246 (RGTD…KSDD). A ccN domain region spans residues 200-268 (NSLLVPDSLR…SPRASPAHSP (69 aa)). Positions 225–228 (KKRK) match the Nuclear localization signal motif. Residue S239 is modified to Phosphoserine. Residues 257-266 (PSSPRASPAH) are compositionally biased toward low complexity. Phosphoserine; by CDK1 occurs at positions 259, 263, and 267. The span at 267–283 (SPRENGIDKNRLLKKDA) shows a compositional bias: basic and acidic residues. Residues 269–450 (RENGIDKNRL…GGKPAYSFHV (182 aa)) are SP domain. Low complexity predominate over residues 284 to 298 (SSSPASTASSASSTS). S286 bears the Phosphoserine mark. Residues 300 to 310 (KSKEMSLHEKA) are compositionally biased toward basic and acidic residues. 6 WD repeats span residues 470-501 (GIPR…HVYT), 528-558 (NRDN…SIWD), 572-602 (SSAP…AVWD), 614-644 (GHTD…RSWD), 696-726 (LHES…NAWR), and 737-767 (KESS…TVYE).

This sequence belongs to the WD repeat Groucho/TLE family. In terms of assembly, homooligomer and heterooligomer with other family members. Binds RUNX1, RUNX3, FOXA2, KDM6A, UTY, histone H3, HESX1, ESRRG and the NF-kappa-B subunit RELA. Interacts with HES1 (via WRPW motif). Binds TCF7, LEF1, TCF7L1 and TCF7L2. Interacts with SIX3. Interacts with EFNB1. Interacts with TLE4. Interacts with FOXG1/BF-1; the interaction is inhibited by TLE6/GRG6. In terms of processing, phosphorylated, probably by CDK1. The degree of phosphorylation varies throughout the cell cycle, and is highest at the G2/M transition. Becomes hyperphosphorylated in response to cell differentiation and interaction with HES1 or RUNX1. Post-translationally, ubiquitinated by XIAP/BIRC4. In terms of tissue distribution, in all tissues examined, mostly in brain, liver and muscle.

The protein localises to the nucleus. Transcriptional corepressor that binds to a number of transcription factors. Inhibits NF-kappa-B-regulated gene expression. Inhibits the transcriptional activation mediated by FOXA2, and by CTNNB1 and TCF family members in Wnt signaling. Enhances FOXG1/BF-1- and HES1-mediated transcriptional repression. The effects of full-length TLE family members may be modulated by association with dominant-negative AES. Unusual function as coactivator for ESRRG. The protein is Transducin-like enhancer protein 1 (TLE1) of Homo sapiens (Human).